Here is a 229-residue protein sequence, read N- to C-terminus: tRNA (guanine-N(7)-)-methyltransferase (229 aa).

S-adenosyl-L-methionine-binding residues include Glu62, Glu87, Asp114, and Asp137. Residue Asp137 is part of the active site. Lys141 serves as a coordination point for substrate. An interaction with RNA region spans residues 143 to 148; sequence KHNKRR. Substrate is bound by residues Asp173 and 208-211; that span reads TKFE.

The protein belongs to the class I-like SAM-binding methyltransferase superfamily. TrmB family.

The catalysed reaction is guanosine(46) in tRNA + S-adenosyl-L-methionine = N(7)-methylguanosine(46) in tRNA + S-adenosyl-L-homocysteine. Its pathway is tRNA modification; N(7)-methylguanine-tRNA biosynthesis. Its function is as follows. Catalyzes the formation of N(7)-methylguanine at position 46 (m7G46) in tRNA. The chain is tRNA (guanine-N(7)-)-methyltransferase from Francisella philomiragia subsp. philomiragia (strain ATCC 25017 / CCUG 19701 / FSC 153 / O#319-036).